We begin with the raw amino-acid sequence, 284 residues long: Nucleotide-binding protein NGK_0463 (284 aa).

ATP is bound at residue 8–15 (GLSGSGKS). A GTP-binding site is contributed by 58–61 (DVRS).

The protein belongs to the RapZ-like family.

Its function is as follows. Displays ATPase and GTPase activities. This is Nucleotide-binding protein NGK_0463 from Neisseria gonorrhoeae (strain NCCP11945).